We begin with the raw amino-acid sequence, 1351 residues long: Tripartite motif-containing protein 66 (1351 aa).

The B box-type 1; atypical zinc finger occupies 105–150 (MARNCSECKEKRAAHILCTYCNRWLCSSCTEEHRHSPVPGGPFFPR). Positions 109, 112, 133, 139, 169, 172, 192, and 197 each coordinate Zn(2+). The segment at 164–205 (DFTLYCPLHTQEVLKLFCETCDMLTCHSCLVVEHKEHRCRHV) adopts a B box-type 2 zinc-finger fold. The stretch at 234-304 (AKQIEDRIFE…IMVLNRQFEH (71 aa)) forms a coiled coil. Disordered regions lie at residues 542-608 (FGHH…CSQN), 663-730 (APVQ…VRKH), and 857-895 (CPLQSIPPVSDMQPETGSSSSSGRTSGSLCPRDGADPSL). Residues 560 to 588 (QLPPPPPPLPHPPPPLPPPPQQPHPPLPP) are compositionally biased toward pro residues. Polar residues predominate over residues 664–676 (PVQSQSQEETLQA). Residues 872–884 (TGSSSSSGRTSGS) show a composition bias toward low complexity. The PxVxL motif signature appears at 995–999 (PYVRL). A disordered region spans residues 1067 to 1098 (TSLAGQRPPEVEGTSPEEHRLIPRTPGAKKGP). The PHD-type zinc-finger motif lies at 1105–1152 (EDFCAVCLNGGELLCCDRCPKVFHLSCHVPALLSFPGGEWVCTLCRSL). Residues 1176-1282 (GLSMYDQKKC…VFFEGWLKEI (107 aa)) form the Bromo domain. Residues 1289–1351 (AQPRQEDSDS…FRLANSISQV (63 aa)) are disordered.

As to quaternary structure, can form homodimers and heterodimers. Interacts with CBX5, CBX1 and CBX3 via PxVxL motif.

It localises to the nucleus. In terms of biological role, may function as transcription repressor; The repressive effects are mediated, at least in part, by recruitment of deacetylase activity. May play a role as negative regulator of postmeiotic genes acting through CBX3 complex formation and centromere association. The protein is Tripartite motif-containing protein 66 (TRIM66) of Homo sapiens (Human).